We begin with the raw amino-acid sequence, 128 residues long: MKRREAREKALQALFQIELNEMSLDQAIKNIMEDEQDDYMEKLVEGVMANKAEIDAIIEPNLDNWRIDRLSKVDLSLLRLSVYEIKYLDDVPNRVSLNESIEIAKIYSDEKSSKFINGVLANIAPEDK.

This sequence belongs to the NusB family.

Functionally, involved in transcription antitermination. Required for transcription of ribosomal RNA (rRNA) genes. Binds specifically to the boxA antiterminator sequence of the ribosomal RNA (rrn) operons. The protein is Transcription antitermination protein NusB of Listeria monocytogenes serotype 4a (strain HCC23).